Here is a 233-residue protein sequence, read N- to C-terminus: MNHLNKLMERLGHQFNNLELLKIALTHRSSGADNNERLEFLGDSVLGFIIASELYQRRPQAREGDLSRMRASMVNGDELAQMSIKLGINEYLQLGVGEQKSGGKRRRSILADALEAIVGAIYIDAGLETCRRCVLNWYGERVDDLSKLSPKKDAKSLLQEWLQARRLPLPTYEVKITGEAHAQTFTVNCYVKGLPHKTEGVNTTRRRAEQIAAKRFLELLDDGKGDGITERDQ.

Residues 4-126 form the RNase III domain; sequence LNKLMERLGH…IVGAIYIDAG (123 aa). Residue glutamate 39 coordinates Mg(2+). Aspartate 43 is an active-site residue. Positions 112 and 115 each coordinate Mg(2+). Glutamate 115 is an active-site residue. A DRBM domain is found at 153-222; sequence DAKSLLQEWL…AKRFLELLDD (70 aa).

The protein belongs to the ribonuclease III family. Homodimer. It depends on Mg(2+) as a cofactor.

Its subcellular location is the cytoplasm. The catalysed reaction is Endonucleolytic cleavage to 5'-phosphomonoester.. Digests double-stranded RNA. Involved in the processing of primary rRNA transcript to yield the immediate precursors to the large and small rRNAs (23S and 16S). Processes some mRNAs, and tRNAs when they are encoded in the rRNA operon. Processes pre-crRNA and tracrRNA of type II CRISPR loci if present in the organism. The chain is Ribonuclease 3 from Coxiella burnetii (strain CbuK_Q154) (Coxiella burnetii (strain Q154)).